Here is a 201-residue protein sequence, read N- to C-terminus: Probable nicotinate-nucleotide adenylyltransferase (201 aa).

This sequence belongs to the NadD family.

The catalysed reaction is nicotinate beta-D-ribonucleotide + ATP + H(+) = deamido-NAD(+) + diphosphate. It participates in cofactor biosynthesis; NAD(+) biosynthesis; deamido-NAD(+) from nicotinate D-ribonucleotide: step 1/1. Its function is as follows. Catalyzes the reversible adenylation of nicotinate mononucleotide (NaMN) to nicotinic acid adenine dinucleotide (NaAD). In Carboxydothermus hydrogenoformans (strain ATCC BAA-161 / DSM 6008 / Z-2901), this protein is Probable nicotinate-nucleotide adenylyltransferase.